A 129-amino-acid chain; its full sequence is Small ribosomal subunit protein uS8 (129 aa).

The protein belongs to the universal ribosomal protein uS8 family. Part of the 30S ribosomal subunit. Contacts proteins S5 and S12.

In terms of biological role, one of the primary rRNA binding proteins, it binds directly to 16S rRNA central domain where it helps coordinate assembly of the platform of the 30S subunit. The chain is Small ribosomal subunit protein uS8 from Colwellia psychrerythraea (strain 34H / ATCC BAA-681) (Vibrio psychroerythus).